Reading from the N-terminus, the 341-residue chain is Ketol-acid reductoisomerase (NADP(+)) (341 aa).

The 182-residue stretch at 1–182 (MTEMFYDDDA…GGTRAGVIKT (182 aa)) folds into the KARI N-terminal Rossmann domain. Residues 25–28 (YGSQ), Lys48, Ser51, Ser53, and 83–86 (DQHQ) contribute to the NADP(+) site. His108 is a catalytic residue. Gly134 contacts NADP(+). Positions 183 to 328 (TFTEETETDL…RELRGLFSWQ (146 aa)) constitute a KARI C-terminal knotted domain. The Mg(2+) site is built by Asp191, Glu195, Glu227, and Glu231. Ser252 is a binding site for substrate.

Belongs to the ketol-acid reductoisomerase family. Mg(2+) is required as a cofactor.

It catalyses the reaction (2R)-2,3-dihydroxy-3-methylbutanoate + NADP(+) = (2S)-2-acetolactate + NADPH + H(+). The catalysed reaction is (2R,3R)-2,3-dihydroxy-3-methylpentanoate + NADP(+) = (S)-2-ethyl-2-hydroxy-3-oxobutanoate + NADPH + H(+). The protein operates within amino-acid biosynthesis; L-isoleucine biosynthesis; L-isoleucine from 2-oxobutanoate: step 2/4. It functions in the pathway amino-acid biosynthesis; L-valine biosynthesis; L-valine from pyruvate: step 2/4. Functionally, involved in the biosynthesis of branched-chain amino acids (BCAA). Catalyzes an alkyl-migration followed by a ketol-acid reduction of (S)-2-acetolactate (S2AL) to yield (R)-2,3-dihydroxy-isovalerate. In the isomerase reaction, S2AL is rearranged via a Mg-dependent methyl migration to produce 3-hydroxy-3-methyl-2-ketobutyrate (HMKB). In the reductase reaction, this 2-ketoacid undergoes a metal-dependent reduction by NADPH to yield (R)-2,3-dihydroxy-isovalerate. This chain is Ketol-acid reductoisomerase (NADP(+)), found in Arthrobacter sp. (strain FB24).